The primary structure comprises 79 residues: Darcynin (79 aa).

This sequence belongs to the darcynin family.

This Chromobacterium violaceum (strain ATCC 12472 / DSM 30191 / JCM 1249 / CCUG 213 / NBRC 12614 / NCIMB 9131 / NCTC 9757 / MK) protein is Darcynin.